A 319-amino-acid polypeptide reads, in one-letter code: Taste receptor type 2 member 30 (319 aa).

A topological domain (extracellular) is located at residue Met1. Residues 2–22 (ITFLPIIFSILIVVIFVVGNF) traverse the membrane as a helical segment. Residues 23–46 (ANGFIALVNSIEWVKRQKISFVDQ) are Cytoplasmic-facing. A helical membrane pass occupies residues 47–67 (ILTALAVSRVGLLWVLLLHWY). Residues 68 to 86 (ATQLNPAFYSVEVRITVYN) are Extracellular-facing. A helical transmembrane segment spans residues 87 to 107 (VWAVTNHFSSWLATSLSMFYL). The Cytoplasmic portion of the chain corresponds to 108–126 (LKIANFSNLIFLRIKRRVK). A helical membrane pass occupies residues 127–147 (SVVLVILLGPLLFLVCHLFVI). Over 148–178 (NMDETIWTKEYEGNMTWKIKLKSAMYHSNMT) the chain is Extracellular. N-linked (GlcNAc...) asparagine glycosylation is found at Asn161 and Asn176. Residues 179–199 (LTILANFVPLTLTLISFLLLI) form a helical membrane-spanning segment. Topologically, residues 200–229 (CSLCKHLKKMQLHGKGSQDPSTKVHIKALQ) are cytoplasmic. Residues 230-250 (TVTSFLLLCAIYFLSMIISVC) form a helical membrane-spanning segment. The Extracellular portion of the chain corresponds to 251 to 259 (NLGRLQKQP). The helical transmembrane segment at 260–280 (VFMFCQAIIFSYPSTHPFILI) threads the bilayer. Over 281-319 (LGNKKLKQIFLSVLWHVRYWVKDRSLRLHRFTRAALCKG) the chain is Cytoplasmic.

Belongs to the G-protein coupled receptor T2R family.

It localises to the membrane. Receptor that may play a role in the perception of bitterness and is gustducin-linked. May play a role in sensing the chemical composition of the gastrointestinal content. The activity of this receptor may stimulate alpha gustducin, mediate PLC-beta-2 activation and lead to the gating of TRPM5. This Pan paniscus (Pygmy chimpanzee) protein is Taste receptor type 2 member 30 (TAS2R30).